A 327-amino-acid chain; its full sequence is MSEIKTDDPKRGIKLRGADKTARIPIKVVPLQEKLKKPEWIRAKLPSRKFFEIKDILREQKMHTVCEEASCPNIGECFSKGTATFMIMGDICTRRCPFCDVGHGRPNMLDPDEPKNLAESVKAMNLRYVVITSVDRDDLRDGGAQHFADCIKAIRETSPNTKIEILVPDFRGRLDIALKILAETPPDVMNHNLETHPSLYRKARPGANYQHSLDLLKRYKEMMPHIPTKSGIMVGLGETDEDVREIMRDMRAHNIEMITIGQYLQPSDGHLPVLRYVTPEQFKIFEKEAYELGFSNAAIGAMVRSSYHADEQAAEALRESHGGCGHH.

Positions 66, 71, 77, 92, 96, 99, and 306 each coordinate [4Fe-4S] cluster. The 218-residue stretch at phenylalanine 78–serine 295 folds into the Radical SAM core domain.

The protein belongs to the radical SAM superfamily. Lipoyl synthase family. [4Fe-4S] cluster is required as a cofactor.

It is found in the cytoplasm. The enzyme catalyses [[Fe-S] cluster scaffold protein carrying a second [4Fe-4S](2+) cluster] + N(6)-octanoyl-L-lysyl-[protein] + 2 oxidized [2Fe-2S]-[ferredoxin] + 2 S-adenosyl-L-methionine + 4 H(+) = [[Fe-S] cluster scaffold protein] + N(6)-[(R)-dihydrolipoyl]-L-lysyl-[protein] + 4 Fe(3+) + 2 hydrogen sulfide + 2 5'-deoxyadenosine + 2 L-methionine + 2 reduced [2Fe-2S]-[ferredoxin]. It participates in protein modification; protein lipoylation via endogenous pathway; protein N(6)-(lipoyl)lysine from octanoyl-[acyl-carrier-protein]: step 2/2. In terms of biological role, catalyzes the radical-mediated insertion of two sulfur atoms into the C-6 and C-8 positions of the octanoyl moiety bound to the lipoyl domains of lipoate-dependent enzymes, thereby converting the octanoylated domains into lipoylated derivatives. The sequence is that of Lipoyl synthase from Neisseria meningitidis serogroup A / serotype 4A (strain DSM 15465 / Z2491).